The primary structure comprises 345 residues: S-adenosylmethionine:tRNA ribosyltransferase-isomerase (345 aa).

It belongs to the QueA family. Monomer.

It localises to the cytoplasm. The catalysed reaction is 7-aminomethyl-7-carbaguanosine(34) in tRNA + S-adenosyl-L-methionine = epoxyqueuosine(34) in tRNA + adenine + L-methionine + 2 H(+). It functions in the pathway tRNA modification; tRNA-queuosine biosynthesis. Transfers and isomerizes the ribose moiety from AdoMet to the 7-aminomethyl group of 7-deazaguanine (preQ1-tRNA) to give epoxyqueuosine (oQ-tRNA). The polypeptide is S-adenosylmethionine:tRNA ribosyltransferase-isomerase (Shewanella oneidensis (strain ATCC 700550 / JCM 31522 / CIP 106686 / LMG 19005 / NCIMB 14063 / MR-1)).